A 248-amino-acid polypeptide reads, in one-letter code: 5'-nucleotidase SurE (248 aa).

A divalent metal cation is bound by residues Asp8, Asp9, Ser39, and Asn91.

This sequence belongs to the SurE nucleotidase family. A divalent metal cation is required as a cofactor.

The protein resides in the cytoplasm. The catalysed reaction is a ribonucleoside 5'-phosphate + H2O = a ribonucleoside + phosphate. Functionally, nucleotidase that shows phosphatase activity on nucleoside 5'-monophosphates. The chain is 5'-nucleotidase SurE from Neisseria meningitidis serogroup A / serotype 4A (strain DSM 15465 / Z2491).